A 347-amino-acid polypeptide reads, in one-letter code: Probable E3 ubiquitin-protein ligase DTX3 (347 aa).

The tract at residues 113–157 is disordered; it reads EHPEMHRAGPPPLRAAPLLPPGARGLPPPPPPLPPPLPPRLREEA. A compositionally biased stretch (pro residues) spans 121–151; sequence GPPPLRAAPLLPPGARGLPPPPPPLPPPLPP. The RING-type zinc finger occupies 164–205; that stretch reads CPICLGEIQNAKTLEKCRHSFCEGCITRALQVKKACPMCGRF.

It belongs to the Deltex family. As to quaternary structure, homodimer. May form a heterodimers with other members of the Deltex family. Interacts with NOTCH1.

It localises to the cytoplasm. It carries out the reaction S-ubiquitinyl-[E2 ubiquitin-conjugating enzyme]-L-cysteine + [acceptor protein]-L-lysine = [E2 ubiquitin-conjugating enzyme]-L-cysteine + N(6)-ubiquitinyl-[acceptor protein]-L-lysine.. It functions in the pathway protein modification; protein ubiquitination. In terms of biological role, regulator of Notch signaling, a signaling pathway involved in cell-cell communications that regulates a broad spectrum of cell-fate determinations. Probably acts both as a positive and negative regulator of Notch, depending on the developmental and cell context. Functions as an ubiquitin ligase protein in vitro, suggesting that it may regulate the Notch pathway via some ubiquitin ligase activity. In Homo sapiens (Human), this protein is Probable E3 ubiquitin-protein ligase DTX3 (DTX3).